The sequence spans 292 residues: Protein/nucleic acid deglycase HchA (292 aa).

The span at 1–12 (MSQDVNKLSKQP) shows a compositional bias: polar residues. The interval 1–23 (MSQDVNKLSKQPTPDKAEDNAFF) is disordered. Cys190 acts as the Nucleophile in catalysis.

Belongs to the peptidase C56 family. HchA subfamily.

The protein localises to the cytoplasm. The catalysed reaction is N(omega)-(1-hydroxy-2-oxopropyl)-L-arginyl-[protein] + H2O = lactate + L-arginyl-[protein] + H(+). It catalyses the reaction N(6)-(1-hydroxy-2-oxopropyl)-L-lysyl-[protein] + H2O = lactate + L-lysyl-[protein] + H(+). It carries out the reaction S-(1-hydroxy-2-oxopropyl)-L-cysteinyl-[protein] + H2O = lactate + L-cysteinyl-[protein] + H(+). The enzyme catalyses N(omega)-(1-hydroxy-2-oxoethyl)-L-arginyl-[protein] + H2O = L-arginyl-[protein] + glycolate + H(+). The catalysed reaction is N(6)-(1-hydroxy-2-oxoethyl)-L-lysyl-[protein] + H2O = glycolate + L-lysyl-[protein] + H(+). It catalyses the reaction S-(1-hydroxy-2-oxoethyl)-L-cysteinyl-[protein] + H2O = glycolate + L-cysteinyl-[protein] + H(+). It carries out the reaction N(2)-(1-hydroxy-2-oxopropyl)-dGTP + H2O = lactate + dGTP + H(+). The enzyme catalyses N(2)-(1-hydroxy-2-oxopropyl)-GTP + H2O = lactate + GTP + H(+). The catalysed reaction is N(2)-(1-hydroxy-2-oxopropyl)-GDP + H2O = lactate + GDP + H(+). It catalyses the reaction N(2)-(1-hydroxy-2-oxopropyl)-GMP + H2O = lactate + GMP + H(+). It carries out the reaction N(2)-(1-hydroxy-2-oxoethyl)-dGTP + H2O = dGTP + glycolate + H(+). The enzyme catalyses N(2)-(1-hydroxy-2-oxoethyl)-GTP + H2O = glycolate + GTP + H(+). The catalysed reaction is N(2)-(1-hydroxy-2-oxoethyl)-GDP + H2O = glycolate + GDP + H(+). It catalyses the reaction N(2)-(1-hydroxy-2-oxoethyl)-GMP + H2O = glycolate + GMP + H(+). It carries out the reaction an N(2)-(1-hydroxy-2-oxopropyl)-guanosine in RNA + H2O = a guanosine in RNA + lactate + H(+). The enzyme catalyses an N(2)-(1-hydroxy-2-oxopropyl)-2'-deoxyguanosine in DNA + H2O = a 2'-deoxyguanosine in DNA + lactate + H(+). The catalysed reaction is an N(2)-(1-hydroxy-2-oxoethyl)-guanosine in RNA + H2O = a guanosine in RNA + glycolate + H(+). It catalyses the reaction an N(2)-(1-hydroxy-2-oxoethyl)-2'-deoxyguanosine in DNA + H2O = a 2'-deoxyguanosine in DNA + glycolate + H(+). Functionally, protein and nucleotide deglycase that catalyzes the deglycation of the Maillard adducts formed between amino groups of proteins or nucleotides and reactive carbonyl groups of glyoxals. Thus, functions as a protein deglycase that repairs methylglyoxal- and glyoxal-glycated proteins, and releases repaired proteins and lactate or glycolate, respectively. Deglycates cysteine, arginine and lysine residues in proteins, and thus reactivates these proteins by reversing glycation by glyoxals. Acts on early glycation intermediates (hemithioacetals and aminocarbinols), preventing the formation of Schiff bases and advanced glycation endproducts (AGE). Also functions as a nucleotide deglycase able to repair glycated guanine in the free nucleotide pool (GTP, GDP, GMP, dGTP) and in DNA and RNA. Is thus involved in a major nucleotide repair system named guanine glycation repair (GG repair), dedicated to reversing methylglyoxal and glyoxal damage via nucleotide sanitization and direct nucleic acid repair. Plays an important role in protecting cells from carbonyl stress. The sequence is that of Protein/nucleic acid deglycase HchA from Staphylococcus aureus (strain MRSA252).